Consider the following 222-residue polypeptide: Glutathione S-transferase A2 (222 aa).

Ala-2 carries the N-acetylalanine modification. A GST N-terminal domain is found at 3 to 83; it reads GKPVLHYFNA…YIATKYDLYG (81 aa). Residue Lys-4 is modified to N6-succinyllysine. Residues Tyr-9, Lys-45, 54 to 55, and 67 to 68 contribute to the glutathione site; these read QV and QT. Positions 85–208 constitute a GST C-terminal domain; it reads DMKERALIDM…HPGSQRKPPL (124 aa).

It belongs to the GST superfamily. Alpha family. In terms of assembly, homodimer. Heterodimer of GSTA1 and GSTA2. In terms of tissue distribution, expressed in the kidney.

It carries out the reaction RX + glutathione = an S-substituted glutathione + a halide anion + H(+). Functionally, catalyzes the conjugation of glutathione to a large variety of electrophilic compounds. This chain is Glutathione S-transferase A2 (Gsta2), found in Mus musculus (Mouse).